Consider the following 496-residue polypeptide: COP9 signalosome complex subunit 3 (496 aa).

The PCI domain maps to 243 to 411 (QASHCLGIVI…GNETTTMLRF (169 aa)). Positions 468-496 (GSSERSGVVGSTEADGGGDLDEDLMGDGR) are disordered. Residues 483 to 496 (GGGDLDEDLMGDGR) show a composition bias toward acidic residues.

It belongs to the CSN3 family. In terms of assembly, component of the COP9 signalosome (CSN) complex.

It localises to the cytoplasm. Its subcellular location is the nucleus. Functionally, component of the COP9 signalosome (CSN) complex that acts as an regulator of the ubiquitin (Ubl) conjugation pathway by mediating the deneddylation of the cullin subunit of SCF-type E3 ubiquitin-protein ligase complexes. The CSN complex seems to link protein degradation to sexual development. The chain is COP9 signalosome complex subunit 3 (csnC) from Emericella nidulans (strain FGSC A4 / ATCC 38163 / CBS 112.46 / NRRL 194 / M139) (Aspergillus nidulans).